The primary structure comprises 397 residues: GPI mannosyltransferase 1 (397 aa).

The next 9 membrane-spanning stretches (helical) occupy residues E5–Y25, W79–M99, L111–T128, G156–I176, L193–I213, W257–W277, Y307–A327, I330–L350, and L362–L382.

Belongs to the PIGM family.

The protein resides in the endoplasmic reticulum membrane. The protein operates within glycolipid biosynthesis; glycosylphosphatidylinositol-anchor biosynthesis. Mannosyltransferase involved in glycosylphosphatidylinositol-anchor biosynthesis. Transfers the first alpha-1,4-mannose to GlcN-acyl-PI during GPI precursor assembly. Required for cell wall integrity. The protein is GPI mannosyltransferase 1 (GPI14) of Eremothecium gossypii (strain ATCC 10895 / CBS 109.51 / FGSC 9923 / NRRL Y-1056) (Yeast).